The chain runs to 71 residues: Small ribosomal subunit protein bS21 (71 aa).

This sequence belongs to the bacterial ribosomal protein bS21 family.

The chain is Small ribosomal subunit protein bS21 from Buchnera aphidicola subsp. Schizaphis graminum (strain Sg).